The chain runs to 415 residues: Squalene synthase 12 (415 aa).

2 consecutive transmembrane segments (helical) span residues 281–301 (AIFR…ALCF) and 391–411 (LIAI…SNLL).

It belongs to the phytoene/squalene synthase family. The cofactor is Mg(2+). Mn(2+) is required as a cofactor.

Its subcellular location is the endoplasmic reticulum membrane. It carries out the reaction 2 (2E,6E)-farnesyl diphosphate + NADH + H(+) = squalene + 2 diphosphate + NAD(+). The enzyme catalyses 2 (2E,6E)-farnesyl diphosphate + NADPH + H(+) = squalene + 2 diphosphate + NADP(+). The protein operates within terpene metabolism; lanosterol biosynthesis; lanosterol from farnesyl diphosphate: step 1/3. Component of the triterpene saponins (e.g. ginsenosides or panaxosides) and phytosterols biosynthetic pathways. Catalyzes the biosynthesis of squalene. The polypeptide is Squalene synthase 12 (Panax ginseng (Korean ginseng)).